The following is a 924-amino-acid chain: Bifunctional glutamine synthetase adenylyltransferase/adenylyl-removing enzyme (924 aa).

Positions 1–422 (MQTKGCRFFM…QFKKLIQEEV (422 aa)) are adenylyl removase. The adenylyl transferase stretch occupies residues 424-924 (SPDETDTELE…PASTMALESE (501 aa)).

This sequence belongs to the GlnE family. Mg(2+) is required as a cofactor.

The enzyme catalyses [glutamine synthetase]-O(4)-(5'-adenylyl)-L-tyrosine + phosphate = [glutamine synthetase]-L-tyrosine + ADP. The catalysed reaction is [glutamine synthetase]-L-tyrosine + ATP = [glutamine synthetase]-O(4)-(5'-adenylyl)-L-tyrosine + diphosphate. Its function is as follows. Involved in the regulation of glutamine synthetase GlnA, a key enzyme in the process to assimilate ammonia. When cellular nitrogen levels are high, the C-terminal adenylyl transferase (AT) inactivates GlnA by covalent transfer of an adenylyl group from ATP to specific tyrosine residue of GlnA, thus reducing its activity. Conversely, when nitrogen levels are low, the N-terminal adenylyl removase (AR) activates GlnA by removing the adenylyl group by phosphorolysis, increasing its activity. The regulatory region of GlnE binds the signal transduction protein PII (GlnB) which indicates the nitrogen status of the cell. This Acinetobacter baylyi (strain ATCC 33305 / BD413 / ADP1) protein is Bifunctional glutamine synthetase adenylyltransferase/adenylyl-removing enzyme.